The sequence spans 592 residues: Arginine--tRNA ligase (592 aa).

The short motif at 128 to 138 (ANPTGPLHVGH) is the 'HIGH' region element.

It belongs to the class-I aminoacyl-tRNA synthetase family. As to quaternary structure, monomer.

It localises to the cytoplasm. The enzyme catalyses tRNA(Arg) + L-arginine + ATP = L-arginyl-tRNA(Arg) + AMP + diphosphate. The protein is Arginine--tRNA ligase of Hydrogenovibrio crunogenus (strain DSM 25203 / XCL-2) (Thiomicrospira crunogena).